A 1615-amino-acid polypeptide reads, in one-letter code: Ferredoxin-dependent glutamate synthase, chloroplastic (1615 aa).

The transit peptide at 1 to 52 (MATLPRAAAAAAPSPAAALLPLPRAAPLLAGRAAARSAARRLRARGTRAPPL) directs the protein to the chloroplast. The active-site Nucleophile is Cys-97. Residues 97 to 496 (CGVGFVANLK…PGMMITVDLQ (400 aa)) enclose the Glutamine amidotransferase type-2 domain. Position 1175–1232 (1175–1232 (LSETHQTLIQNGLRERVVLRVDGGFRSGLDVLMAAAMGADEYGFGSVAMIATGCVMAR)) interacts with FMN. Residues Cys-1228, Cys-1234, and Cys-1239 each contribute to the [3Fe-4S] cluster site.

It belongs to the glutamate synthase family. It depends on [3Fe-4S] cluster as a cofactor. FAD is required as a cofactor. FMN serves as cofactor. As to expression, expressed in leaf blades and at lower levels in roots.

The protein localises to the plastid. It localises to the chloroplast. The catalysed reaction is 2 oxidized [2Fe-2S]-[ferredoxin] + 2 L-glutamate = L-glutamine + 2 reduced [2Fe-2S]-[ferredoxin] + 2-oxoglutarate + 2 H(+). It participates in amino-acid biosynthesis; L-glutamate biosynthesis via GLT pathway; L-glutamate from 2-oxoglutarate and L-glutamine (ferredoxin route): step 1/1. The protein operates within energy metabolism; nitrogen metabolism. Its function is as follows. Involved in glutamate biosynthesis in leaf. Required for the reassimilation of ammonium ions generated during photorespiration. In Oryza sativa subsp. japonica (Rice), this protein is Ferredoxin-dependent glutamate synthase, chloroplastic (GLU).